A 549-amino-acid chain; its full sequence is Hydroxylamine reductase (549 aa).

The [4Fe-4S] cluster site is built by C5, C8, C17, and C23. Residues H244, E268, C312, C403, C431, C456, E491, and K493 each coordinate hybrid [4Fe-2O-2S] cluster. C403 bears the Cysteine persulfide mark.

This sequence belongs to the HCP family. Requires [4Fe-4S] cluster as cofactor. The cofactor is hybrid [4Fe-2O-2S] cluster.

The protein localises to the cytoplasm. The enzyme catalyses A + NH4(+) + H2O = hydroxylamine + AH2 + H(+). Its function is as follows. Catalyzes the reduction of hydroxylamine to form NH(3) and H(2)O. The protein is Hydroxylamine reductase of Clostridium perfringens (strain 13 / Type A).